The sequence spans 227 residues: Translation initiation factor 6 (227 aa).

It belongs to the eIF-6 family.

Functionally, binds to the 50S ribosomal subunit and prevents its association with the 30S ribosomal subunit to form the 70S initiation complex. This Methanococcus vannielii (strain ATCC 35089 / DSM 1224 / JCM 13029 / OCM 148 / SB) protein is Translation initiation factor 6.